Reading from the N-terminus, the 451-residue chain is Bifunctional protein GlmU (451 aa).

The segment at 1–236 is pyrophosphorylase; sequence MDQTPSYSPP…YEELRGINSK (236 aa). Residues 17–20, lysine 31, glutamine 79, 84–85, 105–107, glycine 144, glutamate 162, asparagine 177, and asparagine 234 each bind UDP-N-acetyl-alpha-D-glucosamine; these read LAAG, GT, and YGD. Residue aspartate 107 coordinates Mg(2+). Asparagine 234 contributes to the Mg(2+) binding site. A linker region spans residues 237 to 257; that stretch reads VELAEAEATVQIVLRRKALEN. Residues 258–451 are N-acetyltransferase; it reads GVTMTAPETV…EIRRQLKGSV (194 aa). UDP-N-acetyl-alpha-D-glucosamine-binding residues include arginine 323 and lysine 341. Residue histidine 353 is the Proton acceptor of the active site. Residues tyrosine 356 and asparagine 367 each coordinate UDP-N-acetyl-alpha-D-glucosamine. Acetyl-CoA-binding positions include alanine 370, 376–377, serine 395, alanine 413, and arginine 430; that span reads NY.

It in the N-terminal section; belongs to the N-acetylglucosamine-1-phosphate uridyltransferase family. In the C-terminal section; belongs to the transferase hexapeptide repeat family. Homotrimer. Requires Mg(2+) as cofactor.

The protein localises to the cytoplasm. It catalyses the reaction alpha-D-glucosamine 1-phosphate + acetyl-CoA = N-acetyl-alpha-D-glucosamine 1-phosphate + CoA + H(+). It carries out the reaction N-acetyl-alpha-D-glucosamine 1-phosphate + UTP + H(+) = UDP-N-acetyl-alpha-D-glucosamine + diphosphate. It functions in the pathway nucleotide-sugar biosynthesis; UDP-N-acetyl-alpha-D-glucosamine biosynthesis; N-acetyl-alpha-D-glucosamine 1-phosphate from alpha-D-glucosamine 6-phosphate (route II): step 2/2. The protein operates within nucleotide-sugar biosynthesis; UDP-N-acetyl-alpha-D-glucosamine biosynthesis; UDP-N-acetyl-alpha-D-glucosamine from N-acetyl-alpha-D-glucosamine 1-phosphate: step 1/1. Its pathway is bacterial outer membrane biogenesis; LPS lipid A biosynthesis. In terms of biological role, catalyzes the last two sequential reactions in the de novo biosynthetic pathway for UDP-N-acetylglucosamine (UDP-GlcNAc). The C-terminal domain catalyzes the transfer of acetyl group from acetyl coenzyme A to glucosamine-1-phosphate (GlcN-1-P) to produce N-acetylglucosamine-1-phosphate (GlcNAc-1-P), which is converted into UDP-GlcNAc by the transfer of uridine 5-monophosphate (from uridine 5-triphosphate), a reaction catalyzed by the N-terminal domain. This is Bifunctional protein GlmU from Granulibacter bethesdensis (strain ATCC BAA-1260 / CGDNIH1).